The chain runs to 195 residues: Nucleoside triphosphate pyrophosphatase (195 aa).

Asp70 serves as the catalytic Proton acceptor.

It belongs to the Maf family. It depends on a divalent metal cation as a cofactor.

The protein localises to the cytoplasm. It catalyses the reaction a ribonucleoside 5'-triphosphate + H2O = a ribonucleoside 5'-phosphate + diphosphate + H(+). It carries out the reaction a 2'-deoxyribonucleoside 5'-triphosphate + H2O = a 2'-deoxyribonucleoside 5'-phosphate + diphosphate + H(+). Its function is as follows. Nucleoside triphosphate pyrophosphatase. May have a dual role in cell division arrest and in preventing the incorporation of modified nucleotides into cellular nucleic acids. This is Nucleoside triphosphate pyrophosphatase from Cyanothece sp. (strain PCC 7425 / ATCC 29141).